The sequence spans 173 residues: Ribosome maturation factor RimM (173 aa).

A PRC barrel domain is found at 95-169 (EGSYYFKDIL…RIEVTLLEGL (75 aa)).

It belongs to the RimM family. As to quaternary structure, binds ribosomal protein uS19.

The protein localises to the cytoplasm. An accessory protein needed during the final step in the assembly of 30S ribosomal subunit, possibly for assembly of the head region. Essential for efficient processing of 16S rRNA. May be needed both before and after RbfA during the maturation of 16S rRNA. It has affinity for free ribosomal 30S subunits but not for 70S ribosomes. The chain is Ribosome maturation factor RimM from Lactobacillus johnsonii (strain CNCM I-12250 / La1 / NCC 533).